We begin with the raw amino-acid sequence, 427 residues long: MDAVASLLGNASGIPPPCELGLDNETLFCLDQPPPSKEWQPAVQILLYSLIFLLSVLGNTLVITVLIRNKRMRTVTNIFLLSLAISDLMLCLFCMPFNLIPNLLKDFIFGSALCKTTTYLMGTSVSVSTLNLVAISLERYGAICKPLQSRVWQTKSHALKVIAATWCLSFAIMTPYPIYSNLVPFTKTNNQTANMCRFLLPSDVMQQAWHTFLLLILFLIPGIVMMVAYGMISLELYQGIKFDASQKKSAKERKASTGSGRFEDNDGCYLQRSKPTRQLELQQLSGGGGGRVSRIRSSSSAATLMAKKRVIRMLMVIVVLFFLCWMPIFSANAWRAYDTVSAERRLSGTPISFILLLSYTSSCVNPIIYCFMNRRFRLGFMATFPCCPNPGPPGPRAEAGEEEEGRTTRASLSRYSYSHMSASAPPS.

Residues 1 to 41 are Extracellular-facing; it reads MDAVASLLGNASGIPPPCELGLDNETLFCLDQPPPSKEWQP. N-linked (GlcNAc...) asparagine glycans are attached at residues Asn10 and Asn24. A disulfide bond links Cys18 and Cys29. The helical transmembrane segment at 42–67 threads the bilayer; sequence AVQILLYSLIFLLSVLGNTLVITVLI. At 68–77 the chain is on the cytoplasmic side; the sequence is RNKRMRTVTN. A helical membrane pass occupies residues 78–104; that stretch reads IFLLSLAISDLMLCLFCMPFNLIPNLL. At 105 to 115 the chain is on the extracellular side; sequence KDFIFGSALCK. Cysteines 114 and 196 form a disulfide. Residues 116-137 form a helical membrane-spanning segment; it reads TTTYLMGTSVSVSTLNLVAISL. At 138 to 157 the chain is on the cytoplasmic side; the sequence is ERYGAICKPLQSRVWQTKSH. Residues 158–178 form a helical membrane-spanning segment; it reads ALKVIAATWCLSFAIMTPYPI. The Extracellular portion of the chain corresponds to 179 to 210; that stretch reads YSNLVPFTKTNNQTANMCRFLLPSDVMQQAWH. The N-linked (GlcNAc...) asparagine glycan is linked to Asn190. The chain crosses the membrane as a helical span at residues 211-234; it reads TFLLLILFLIPGIVMMVAYGMISL. At 235–312 the chain is on the cytoplasmic side; the sequence is ELYQGIKFDA…TLMAKKRVIR (78 aa). The helical transmembrane segment at 313–333 threads the bilayer; that stretch reads MLMVIVVLFFLCWMPIFSANA. The Extracellular portion of the chain corresponds to 334–348; sequence WRAYDTVSAERRLSG. The chain crosses the membrane as a helical span at residues 349–372; it reads TPISFILLLSYTSSCVNPIIYCFM. Topologically, residues 373-427 are cytoplasmic; it reads NRRFRLGFMATFPCCPNPGPPGPRAEAGEEEEGRTTRASLSRYSYSHMSASAPPS. Cys386 carries the S-palmitoyl cysteine lipid modification. Residues 391 to 427 are disordered; sequence GPPGPRAEAGEEEEGRTTRASLSRYSYSHMSASAPPS. Polar residues predominate over residues 411 to 421; the sequence is SLSRYSYSHMS.

The protein belongs to the G-protein coupled receptor 1 family.

The protein localises to the cell membrane. In terms of biological role, receptor for cholecystokinin. Mediates pancreatic growth and enzyme secretion, smooth muscle contraction of the gall bladder and stomach. Has a 1000-fold higher affinity for CCK rather than for gastrin. It modulates feeding and dopamine-induced behavior in the central and peripheral nervous system. This receptor mediates its action by association with G proteins that activate a phosphatidylinositol-calcium second messenger system. In Oryctolagus cuniculus (Rabbit), this protein is Cholecystokinin receptor type A (CCKAR).